Consider the following 436-residue polypeptide: Trigger factor (436 aa).

Positions 161–246 constitute a PPIase FKBP-type domain; the sequence is GDQVNIDFVG…VNSVAAPQLP (86 aa).

Belongs to the FKBP-type PPIase family. Tig subfamily.

It is found in the cytoplasm. It catalyses the reaction [protein]-peptidylproline (omega=180) = [protein]-peptidylproline (omega=0). Involved in protein export. Acts as a chaperone by maintaining the newly synthesized protein in an open conformation. Functions as a peptidyl-prolyl cis-trans isomerase. The sequence is that of Trigger factor from Stutzerimonas stutzeri (strain A1501) (Pseudomonas stutzeri).